The sequence spans 226 residues: Lipoprotein-releasing system ATP-binding protein LolD (226 aa).

The region spanning 5 to 226 is the ABC transporter domain; sequence LRCEKISKFY…MADGVLREAS (222 aa). ATP is bound at residue 41-48; the sequence is GSSGSGKS.

Belongs to the ABC transporter superfamily. Lipoprotein translocase (TC 3.A.1.125) family. The complex is composed of two ATP-binding proteins (LolD) and two transmembrane proteins (LolC and LolE).

The protein localises to the cell inner membrane. Part of the ABC transporter complex LolCDE involved in the translocation of mature outer membrane-directed lipoproteins, from the inner membrane to the periplasmic chaperone, LolA. Responsible for the formation of the LolA-lipoprotein complex in an ATP-dependent manner. This chain is Lipoprotein-releasing system ATP-binding protein LolD, found in Haemophilus ducreyi (strain 35000HP / ATCC 700724).